We begin with the raw amino-acid sequence, 683 residues long: Tripartite terminase subunit 3 (683 aa).

A Walker A motif motif is present at residues 217–224 (IPRRHGKT). A Walker B motif motif is present at residues 312–317 (LLYIDE). Catalysis depends on E317, which acts as the For ATPase activity. Residues D472, E546, and D658 each act as for nuclease activity in the active site.

It belongs to the herpesviridae TRM3 protein family. Interacts with the terminase subunits TRM1 and TRM2. Interacts with portal protein.

Its subcellular location is the host nucleus. Its function is as follows. Component of the molecular motor that translocates viral genomic DNA in empty capsid during DNA packaging. Forms a tripartite terminase complex together with TRM1 and TRM2 in the host cytoplasm. Once the complex reaches the host nucleus, it interacts with the capsid portal vertex. This portal forms a ring in which genomic DNA is translocated into the capsid. TRM3 carries an RNase H-like nuclease activity that plays an important role for the cleavage of concatemeric viral DNA into unit length genomes. In Saimiri sciureus (Common squirrel monkey), this protein is Tripartite terminase subunit 3.